The sequence spans 61 residues: Large ribosomal subunit protein uL30 (61 aa).

It belongs to the universal ribosomal protein uL30 family. As to quaternary structure, part of the 50S ribosomal subunit.

The sequence is that of Large ribosomal subunit protein uL30 from Lacticaseibacillus casei (strain BL23) (Lactobacillus casei).